Consider the following 703-residue polypeptide: Pentatricopeptide repeat-containing protein At1g22830 (703 aa).

PPR repeat units follow at residues 82 to 116, 117 to 147, 148 to 182, 183 to 217, 218 to 248, 249 to 283, 284 to 318, 319 to 353, 356 to 386, 387 to 421, 422 to 452, 458 to 488, 489 to 523, 524 to 554, and 560 to 594; these read VLYS…GLEF, DSVL…SEIL, HPLP…GIRA, DEFT…SHRC, NLYV…MSER, DAVS…GVEA, SIVT…NVRI, GSVA…CSFS, IDNV…VEAN, SLST…GFHP, NHIT…ILRR, CLIL…MRKR, DKVT…GIKP, DHVT…MEHV, and RLEH…PSSA. The type E motif stretch occupies residues 595–671; sequence MCATLLKACL…AHEFALMETD (77 aa). The tract at residues 671–703 is disordered; it reads DSELDGENNKPMNDDSVINQEQSSDEERLVEVG.

This sequence belongs to the PPR family. PCMP-E subfamily.

This chain is Pentatricopeptide repeat-containing protein At1g22830 (PCMP-E24), found in Arabidopsis thaliana (Mouse-ear cress).